Consider the following 1759-residue polypeptide: Zinc finger protein castor homolog 1 (1759 aa).

Disordered stretches follow at residues 1–26 (MDLG…PKRK) and 46–175 (KRAD…SSLR). Basic and acidic residues-rich tracts occupy residues 77 to 88 (PRSEEDKRRAVI) and 137 to 160 (EEPS…KEDS). The segment covering 161–171 (GPSTRQASGEA) has biased composition (polar residues). K288 participates in a covalent cross-link: Glycyl lysine isopeptide (Lys-Gly) (interchain with G-Cter in SUMO2). Residues 374–420 (SKYDVRGIQKPGPAKVPPTPSLAPAPLASVPSAPSAPGPGPEPPASL) are disordered. Pro residues predominate over residues 387–396 (AKVPPTPSLA). The span at 397–406 (PAPLASVPSA) shows a compositional bias: low complexity. Positions 407–417 (PSAPGPGPEPP) are enriched in pro residues. 3 consecutive C2H2-type zinc fingers follow at residues 551–575 (YHCM…ENFH), 610–634 (FHCR…KSYH), and 668–692 (FHCI…KRKH). Disordered stretches follow at residues 686–723 (TSHK…SSND), 736–776 (SSLS…SGLL), 824–843 (VSSG…VASG), and 889–949 (ATFD…AVPA). Residues 687 to 698 (SHKRKHERRHIR) show a composition bias toward basic residues. A compositionally biased stretch (low complexity) spans 699–712 (SSGALGLPPSLLGA). A phosphoserine mark is found at S720 and S721. The segment covering 736–764 (SSLSASPTSQQSSASLAAATAATEAGPSA) has biased composition (low complexity). A compositionally biased stretch (basic and acidic residues) spans 925–939 (ASQDRSLDLTVKEPS). K975 is covalently cross-linked (Glycyl lysine isopeptide (Lys-Gly) (interchain with G-Cter in SUMO2)). S981 is modified (phosphoserine). The C2H2-type 4 zinc-finger motif lies at 1031–1055 (FHCVVEECGALFSTLDGAIKHANFH). The disordered stretch occupies residues 1067-1111 (TEAAFPASAAETKPPMAPSSPPVPPVTTATVSSLEGPAPSPASVP). Residues 1081–1091 (PMAPSSPPVPP) are compositionally biased toward pro residues. The C2H2-type 5 zinc-finger motif lies at 1300 to 1324 (FHCIREGCQFSFLLKHQMTSHARKH). Residues 1367–1392 (ESSTMDRSCSSTPVGNESTAAGNTIS) form a disordered region. 3 C2H2-type zinc fingers span residues 1457–1481 (YHCT…AQHH), 1515–1537 (FHCL…RKHH), and 1571–1595 (FHCT…KRKH). 2 disordered regions span residues 1589 to 1620 (DSHK…DGSL) and 1643 to 1736 (LGDA…AGAR). Over residues 1655 to 1673 (AAPGPREGAAAAAAAAGES) the composition is skewed to low complexity. Residues 1674–1723 (SQEDEEEELELPEEEAEDDEDEDDDEDDDDEDDDEDDDDEDLRTDSEESL) are compositionally biased toward acidic residues. Over residues 1724–1736 (PEAAAEAAGAGAR) the composition is skewed to low complexity.

Expressed in heart, lung, skeletal muscle, pancreas, testis, small intestine, and stomach, but it is not detectable in the adult brain.

Its subcellular location is the nucleus. Transcriptional activator. Involved in vascular assembly and morphogenesis through direct transcriptional regulation of EGFL7. This chain is Zinc finger protein castor homolog 1 (CASZ1), found in Homo sapiens (Human).